Consider the following 425-residue polypeptide: Xylose isomerase (425 aa).

Active-site residues include His101 and Asp104. 7 residues coordinate Mg(2+): Glu232, Glu268, His271, Asp296, Asp307, Asp309, and Asp339.

This sequence belongs to the xylose isomerase family. In terms of assembly, homotetramer. Mg(2+) is required as a cofactor.

Its subcellular location is the cytoplasm. The enzyme catalyses alpha-D-xylose = alpha-D-xylulofuranose. The sequence is that of Xylose isomerase from Salmonella paratyphi A (strain ATCC 9150 / SARB42).